A 987-amino-acid chain; its full sequence is Mediator of RNA polymerase II transcription subunit 24 (987 aa).

Short sequence motifs (LXXLL motif) lie at residues 128–132 (LHWLL), 344–348 (LTPLL), 446–450 (LDLLL), 555–559 (LVALL), 786–790 (LPGLL), and 855–859 (LMRLL). Phosphoserine occurs at positions 860 and 871.

It belongs to the Mediator complex subunit 24 family. As to quaternary structure, component of the Mediator complex, which is composed of MED1, MED4, MED6, MED7, MED8, MED9, MED10, MED11, MED12, MED13, MED13L, MED14, MED15, MED16, MED17, MED18, MED19, MED20, MED21, MED22, MED23, MED24, MED25, MED26, MED27, MED29, MED30, MED31, CCNC, CDK8 and CDC2L6/CDK11. The MED12, MED13, CCNC and CDK8 subunits form a distinct module termed the CDK8 module. Mediator containing the CDK8 module is less active than Mediator lacking this module in supporting transcriptional activation. Individual preparations of the Mediator complex lacking one or more distinct subunits have been variously termed ARC, CRSP, DRIP, PC2, SMCC and TRAP. Interacts with AR. Interacts with MED1 and MED10. In terms of tissue distribution, expressed in the adrenal gland, brain, epididymis, heart, kidney, liver, ovary, pancreas, prostate, skeletal muscle, small intestine, spleen, stomach, testis and thymus.

It is found in the nucleus. In terms of biological role, component of the Mediator complex, a coactivator involved in the regulated transcription of nearly all RNA polymerase II-dependent genes. Mediator functions as a bridge to convey information from gene-specific regulatory proteins to the basal RNA polymerase II transcription machinery. Mediator is recruited to promoters by direct interactions with regulatory proteins and serves as a scaffold for the assembly of a functional preinitiation complex with RNA polymerase II and the general transcription factors. Required for basal and activator-dependent transcription. The polypeptide is Mediator of RNA polymerase II transcription subunit 24 (Med24) (Mus musculus (Mouse)).